Consider the following 355-residue polypeptide: Hydroxylysine kinase (355 aa).

The active-site Proton acceptor is Asp-215.

This sequence belongs to the aminoglycoside phosphotransferase family.

It localises to the cytoplasm. It catalyses the reaction (5R)-5-hydroxy-L-lysine + GTP = (5R)-5-phosphooxy-L-lysine + GDP + H(+). Its function is as follows. Catalyzes the GTP-dependent phosphorylation of 5-hydroxy-L-lysine. The chain is Hydroxylysine kinase (hykk) from Danio rerio (Zebrafish).